The sequence spans 496 residues: Solute carrier family 2, facilitated glucose transporter member 3 (496 aa).

At 1-10 the chain is on the cytoplasmic side; it reads MGTQKVTPAL. Residues 11–32 traverse the membrane as a helical segment; that stretch reads IFAITVATIGSFQFGYNTGVIN. At 33–64 the chain is on the extracellular side; the sequence is APEKIIKEFINKTLTDKGNAPPSEVLLTSLWS. Asn-43 carries N-linked (GlcNAc...) asparagine glycosylation. A helical membrane pass occupies residues 65–85; the sequence is LSVAIFSVGGMIGSFSVGLFV. Residues 86 to 90 lie on the Cytoplasmic side of the membrane; the sequence is NRFGR. Residues 91-111 form a helical membrane-spanning segment; that stretch reads RNSMLIVNLLAVTGGCFMGLC. Residues 112–118 are Extracellular-facing; the sequence is KVAKSVE. A helical transmembrane segment spans residues 119–142; sequence MLILGRLVIGLFCGLCTGFVPMYI. At 143-153 the chain is on the cytoplasmic side; it reads GEISPTALRGA. A helical membrane pass occupies residues 154–174; the sequence is FGTLNQLGIVVGILVAQIFGL. A D-glucose-binding site is contributed by Gln-159. Over 175–183 the chain is Extracellular; the sequence is EFILGSEEL. The chain crosses the membrane as a helical span at residues 184–204; sequence WPLLLGFTILPAILQSAALPF. Residues 205–269 are Cytoplasmic-facing; the sequence is CPESPRFLLI…LFRVSSYRQP (65 aa). Thr-232 bears the Phosphothreonine mark. Residues 270–290 traverse the membrane as a helical segment; it reads IIISIVLQLSQQLSGINAVFY. Residues 277-279 form an important for selectivity against fructose region; sequence QLS. Residues 280–281 and Asn-286 contribute to the D-glucose site; that span reads QQ. Residues 291–304 lie on the Extracellular side of the membrane; it reads YSTGIFKDAGVQEP. Residues 305–325 form a helical membrane-spanning segment; it reads IYATIGAGVVNTIFTVVSLFL. D-glucose is bound at residue Asn-315. Over 326–331 the chain is Cytoplasmic; it reads VERAGR. A helical membrane pass occupies residues 332-352; sequence RTLHMIGLGGMAFCSTLMTVS. Residues 353 to 363 are Extracellular-facing; sequence LLLKDNYNGMS. Residues 364 to 389 traverse the membrane as a helical segment; it reads FVCIGAILVFVAFFEIGPGPIPWFIV. Glu-378 and Trp-386 together coordinate D-glucose. The Cytoplasmic segment spans residues 390 to 399; it reads AELFSQGPRP. The helical transmembrane segment at 400–420 threads the bilayer; that stretch reads AAMAVAGCSNWTSNFLVGLLF. Over 421 to 429 the chain is Extracellular; sequence PSAAHYLGA. The helical transmembrane segment at 430-450 threads the bilayer; it reads YVFIIFTGFLITFLAFTFFKV. The Cytoplasmic portion of the chain corresponds to 451–496; that stretch reads PETRGRTFEDITRAFEGQAHGADRSGKDGVMEMNSIEPAKETTTNV. 2 positions are modified to phosphoserine: Ser-475 and Ser-485. Phosphothreonine is present on Thr-492.

It belongs to the major facilitator superfamily. Sugar transporter (TC 2.A.1.1) family. Glucose transporter subfamily. In terms of assembly, interacts with SMIM43; the interaction may promote SLC2A3-mediated glucose transport to meet the energy needs of mesendoderm differentiation. Highly expressed in brain. Expressed in many tissues.

Its subcellular location is the cell membrane. It localises to the perikaryon. The protein resides in the cell projection. It catalyses the reaction D-glucose(out) = D-glucose(in). The enzyme catalyses D-galactose(in) = D-galactose(out). With respect to regulation, deoxyglucose transport is inhibited by D-glucose, D-galactose and maltose. Galactose transport is inhibited by D-glucose and maltose. In terms of biological role, facilitative glucose transporter. Can also mediate the uptake of various other monosaccharides across the cell membrane. Mediates the uptake of glucose, 2-deoxyglucose, galactose, mannose, xylose and fucose, and probably also dehydroascorbate. Does not mediate fructose transport. Required for mesendoderm differentiation. The protein is Solute carrier family 2, facilitated glucose transporter member 3 of Homo sapiens (Human).